A 347-amino-acid chain; its full sequence is Probable arabinogalactan endo-beta-1,4-galactanase A (347 aa).

A signal peptide spans 1 to 16 (MLFSYLLATLPLLANA). Glu150 acts as the Proton donor in catalysis. Glu260 serves as the catalytic Nucleophile.

This sequence belongs to the glycosyl hydrolase 53 family.

It localises to the secreted. The enzyme catalyses The enzyme specifically hydrolyzes (1-&gt;4)-beta-D-galactosidic linkages in type I arabinogalactans.. Endogalactanase involved in the degradation of plant cell wall polysaccharides, and more particularly of hairy regions of pectin. The sequence is that of Probable arabinogalactan endo-beta-1,4-galactanase A (galA) from Aspergillus oryzae (strain ATCC 42149 / RIB 40) (Yellow koji mold).